A 96-amino-acid polypeptide reads, in one-letter code: Large ribosomal subunit protein uL23 (96 aa).

The protein belongs to the universal ribosomal protein uL23 family. As to quaternary structure, part of the 50S ribosomal subunit. Contacts protein L29, and trigger factor when it is bound to the ribosome.

Its function is as follows. One of the early assembly proteins it binds 23S rRNA. One of the proteins that surrounds the polypeptide exit tunnel on the outside of the ribosome. Forms the main docking site for trigger factor binding to the ribosome. The protein is Large ribosomal subunit protein uL23 of Caldicellulosiruptor saccharolyticus (strain ATCC 43494 / DSM 8903 / Tp8T 6331).